Here is a 177-residue protein sequence, read N- to C-terminus: uncharacterized protein (177 aa).

The protein to M.jannaschii MJ0628.

This is an uncharacterized protein from Methanocaldococcus jannaschii (strain ATCC 43067 / DSM 2661 / JAL-1 / JCM 10045 / NBRC 100440) (Methanococcus jannaschii).